The sequence spans 129 residues: Small ribosomal subunit protein uS11 (129 aa).

The protein belongs to the universal ribosomal protein uS11 family. As to quaternary structure, part of the 30S ribosomal subunit. Interacts with proteins S7 and S18. Binds to IF-3.

Located on the platform of the 30S subunit, it bridges several disparate RNA helices of the 16S rRNA. Forms part of the Shine-Dalgarno cleft in the 70S ribosome. In Parabacteroides distasonis (strain ATCC 8503 / DSM 20701 / CIP 104284 / JCM 5825 / NCTC 11152), this protein is Small ribosomal subunit protein uS11.